The chain runs to 278 residues: HTH-type transcriptional regulator HdfR (278 aa).

One can recognise an HTH lysR-type domain in the interval 1–58 (MDTELLKTFLEVSRTRHFGRAAEALYLTQSAVSFRIRQLENQLGVNLFTRHRNNIRLT). Positions 18–37 (FGRAAEALYLTQSAVSFRIR) form a DNA-binding region, H-T-H motif.

It belongs to the LysR transcriptional regulatory family.

Negatively regulates the transcription of the flagellar master operon flhDC by binding to the upstream region of the operon. In Salmonella schwarzengrund (strain CVM19633), this protein is HTH-type transcriptional regulator HdfR.